Consider the following 500-residue polypeptide: tRNA (guanine(37)-N(1))-methyltransferase (500 aa).

S-adenosyl-L-methionine contacts are provided by residues His215, 253–254 (DL), 281–282 (DA), and Asn312. The interval 463–500 (QIVAKKTPKPAPRPLPAKNKTTPDTNKMETDLTKLEMK) is disordered. The segment covering 488 to 500 (NKMETDLTKLEMK) has biased composition (basic and acidic residues).

It belongs to the class I-like SAM-binding methyltransferase superfamily. TRM5/TYW2 family. As to quaternary structure, monomer.

It is found in the mitochondrion matrix. The protein resides in the nucleus. Its subcellular location is the cytoplasm. The catalysed reaction is guanosine(37) in tRNA + S-adenosyl-L-methionine = N(1)-methylguanosine(37) in tRNA + S-adenosyl-L-homocysteine + H(+). Its function is as follows. Specifically methylates the N1 position of guanosine-37 in various cytoplasmic and mitochondrial tRNAs. Methylation is not dependent on the nature of the nucleoside 5' of the target nucleoside. This is the first step in the biosynthesis of wybutosine (yW), a modified base adjacent to the anticodon of tRNAs and required for accurate decoding. The chain is tRNA (guanine(37)-N(1))-methyltransferase from Anopheles darlingi (Mosquito).